A 221-amino-acid chain; its full sequence is Histone H1-like protein HC2 (221 aa).

Composition is skewed to basic residues over residues 1-50 (MLGV…KTVA) and 59-70 (PVAKKATAKKAP). The interval 1 to 70 (MLGVQKKRST…AKKATAKKAP (70 aa)) is disordered.

The protein belongs to the histone H1/H5 family. HCT subfamily.

Might have a role in establishing the nucleoid structure of elementary bodies. The sequence is that of Histone H1-like protein HC2 (hctB) from Chlamydia trachomatis serovar L2 (strain ATCC VR-902B / DSM 19102 / 434/Bu).